A 91-amino-acid polypeptide reads, in one-letter code: MGAMQPMHWLIVAVVVVILFGSKKLPDAARGLGRSLRIFKSEVKEMQNDDAAPASAPVAQPAPAQLPTANTAVVANGAAAPVAQPTEVKPL.

A helical transmembrane segment spans residues 1–21 (MGAMQPMHWLIVAVVVVILFG).

Belongs to the TatA/E family. In terms of assembly, the Tat system comprises two distinct complexes: a TatABC complex, containing multiple copies of TatA, TatB and TatC subunits, and a separate TatA complex, containing only TatA subunits. Substrates initially bind to the TatABC complex, which probably triggers association of the separate TatA complex to form the active translocon.

The protein localises to the cell membrane. In terms of biological role, part of the twin-arginine translocation (Tat) system that transports large folded proteins containing a characteristic twin-arginine motif in their signal peptide across membranes. TatA could form the protein-conducting channel of the Tat system. The chain is Sec-independent protein translocase protein TatA from Rhodococcus erythropolis (strain PR4 / NBRC 100887).